Consider the following 130-residue polypeptide: Small ribosomal subunit protein uS11 (130 aa).

This sequence belongs to the universal ribosomal protein uS11 family. As to quaternary structure, part of the 30S ribosomal subunit. Interacts with proteins S7 and S18. Binds to IF-3.

Its function is as follows. Located on the platform of the 30S subunit, it bridges several disparate RNA helices of the 16S rRNA. Forms part of the Shine-Dalgarno cleft in the 70S ribosome. This is Small ribosomal subunit protein uS11 from Synechococcus sp. (strain WH7803).